We begin with the raw amino-acid sequence, 266 residues long: Succinate dehydrogenase [ubiquinone] iron-sulfur subunit, mitochondrial (266 aa).

The N-terminal 20 residues, 1–20 (MLNVLLRRKAFCLVTKKGMA), are a transit peptide targeting the mitochondrion. A 2Fe-2S ferredoxin-type domain is found at 36–127 (FKVYRWNPDE…QLKIYPLPHM (92 aa)). Residues cysteine 87, cysteine 92, cysteine 95, and cysteine 107 each coordinate [2Fe-2S] cluster. Residues 169 to 199 (DRKKLDGLYECILCACCSTSCPSYWWNQEQY) form the 4Fe-4S ferredoxin-type domain. The [4Fe-4S] cluster site is built by cysteine 179, cysteine 182, and cysteine 185. Cysteine 189 contacts [3Fe-4S] cluster. Position 194 (tryptophan 194) interacts with a ubiquinone. Cysteine 236 and cysteine 242 together coordinate [3Fe-4S] cluster. A [4Fe-4S] cluster-binding site is contributed by cysteine 246.

It belongs to the succinate dehydrogenase/fumarate reductase iron-sulfur protein family. Component of complex II composed of four subunits: a flavoprotein (FP), an iron-sulfur protein (IP), and a cytochrome b composed of a large and a small subunit. [2Fe-2S] cluster is required as a cofactor. It depends on [3Fe-4S] cluster as a cofactor. [4Fe-4S] cluster serves as cofactor.

It localises to the mitochondrion inner membrane. The catalysed reaction is a quinone + succinate = fumarate + a quinol. It functions in the pathway carbohydrate metabolism; tricarboxylic acid cycle; fumarate from succinate (eukaryal route): step 1/1. Its function is as follows. Subunit of succinate dehydrogenase (SDH) that is involved in complex II of the mitochondrial electron transport chain and is responsible for transferring electrons from succinate to ubiquinone (coenzyme Q). SDH1 and SDH2 form the catalytic dimer. Electrons flow from succinate to the FAD bound to SDH1, and sequentially through the iron-sulfur clusters bound to SDH2 and enter the membrane dimer formed by SDH3 and SDH4. The chain is Succinate dehydrogenase [ubiquinone] iron-sulfur subunit, mitochondrial (SDH2) from Saccharomyces cerevisiae (strain ATCC 204508 / S288c) (Baker's yeast).